Consider the following 104-residue polypeptide: Urease subunit beta (104 aa).

The protein belongs to the urease beta subunit family. In terms of assembly, heterotrimer of UreA (gamma), UreB (beta) and UreC (alpha) subunits. Three heterotrimers associate to form the active enzyme.

Its subcellular location is the cytoplasm. The enzyme catalyses urea + 2 H2O + H(+) = hydrogencarbonate + 2 NH4(+). It participates in nitrogen metabolism; urea degradation; CO(2) and NH(3) from urea (urease route): step 1/1. The chain is Urease subunit beta from Rhodopseudomonas palustris (strain BisB18).